The sequence spans 676 residues: Mediator of RNA polymerase II transcription subunit 17 (676 aa).

Disordered stretches follow at residues 27–68 (IGSK…QFSN) and 117–176 (IEND…TQDT). Residues 29 to 40 (SKSTSPHSNSTS) show a composition bias toward low complexity. Basic and acidic residues-rich tracts occupy residues 47–56 (HNTENEEVDN) and 120–134 (DNGK…KAED). A compositionally biased stretch (acidic residues) spans 135 to 145 (GIDTMDIDQND). Residues 146–160 (NSEANTNDIGYNEWS) are compositionally biased toward polar residues.

Belongs to the Mediator complex subunit 17 family. In terms of assembly, component of the Mediator complex.

It is found in the nucleus. Functionally, component of the Mediator complex, a coactivator involved in the regulated transcription of nearly all RNA polymerase II-dependent genes. Mediator functions as a bridge to convey information from gene-specific regulatory proteins to the basal RNA polymerase II transcription machinery. Mediator is recruited to promoters by direct interactions with regulatory proteins and serves as a scaffold for the assembly of a functional preinitiation complex with RNA polymerase II and the general transcription factors. This chain is Mediator of RNA polymerase II transcription subunit 17 (SRB4), found in Candida glabrata (strain ATCC 2001 / BCRC 20586 / JCM 3761 / NBRC 0622 / NRRL Y-65 / CBS 138) (Yeast).